Here is a 453-residue protein sequence, read N- to C-terminus: Tubulin delta chain (453 aa).

Residue 143 to 149 coordinates GTP; the sequence is AGGTGSG.

This sequence belongs to the tubulin family. As to quaternary structure, found in a complex with TEDC1, TEDC2, TUBE1 and TUBD1.

It localises to the nucleus. Its subcellular location is the cytoplasm. It is found in the cytoskeleton. The protein localises to the microtubule organizing center. The protein resides in the centrosome. It localises to the centriole. Its subcellular location is the cell projection. It is found in the cilium. Functionally, acts as a positive regulator of hedgehog signaling and regulates ciliary function. The polypeptide is Tubulin delta chain (TUBD1) (Macaca fascicularis (Crab-eating macaque)).